The primary structure comprises 217 residues: Large ribosomal subunit protein uL16 (217 aa).

This sequence belongs to the universal ribosomal protein uL16 family. As to quaternary structure, component of the small ribosomal subunit. Mature ribosomes consist of a small (40S) and a large (60S) subunit. The 40S subunit contains about 33 different proteins and 1 molecule of RNA (18S). The 60S subunit contains about 49 different proteins and 3 molecules of RNA (25S, 5.8S and 5S).

The protein is Large ribosomal subunit protein uL16 (rpl10) of Dictyostelium discoideum (Social amoeba).